The following is a 344-amino-acid chain: S-adenosylmethionine:tRNA ribosyltransferase-isomerase (344 aa).

Belongs to the QueA family. In terms of assembly, monomer.

It localises to the cytoplasm. The catalysed reaction is 7-aminomethyl-7-carbaguanosine(34) in tRNA + S-adenosyl-L-methionine = epoxyqueuosine(34) in tRNA + adenine + L-methionine + 2 H(+). The protein operates within tRNA modification; tRNA-queuosine biosynthesis. Transfers and isomerizes the ribose moiety from AdoMet to the 7-aminomethyl group of 7-deazaguanine (preQ1-tRNA) to give epoxyqueuosine (oQ-tRNA). This chain is S-adenosylmethionine:tRNA ribosyltransferase-isomerase, found in Thiobacillus denitrificans (strain ATCC 25259 / T1).